The following is a 527-amino-acid chain: Anthranilate synthase component 1 1 (527 aa).

Ser-52 provides a ligand contact to L-tryptophan. The tract at residues 53-72 (AEKTPASDPDGAFTPDTTTE) is disordered. Position 298-300 (298-300 (PYM)) interacts with L-tryptophan. 333-334 (GT) contacts chorismate. Glu-360 provides a ligand contact to Mg(2+). Chorismate is bound by residues Tyr-448, Arg-468, 486–488 (GAG), and Gly-488. Residue Glu-501 participates in Mg(2+) binding.

This sequence belongs to the anthranilate synthase component I family. As to quaternary structure, tetramer of two components I and two components II. It depends on Mg(2+) as a cofactor.

It catalyses the reaction chorismate + L-glutamine = anthranilate + pyruvate + L-glutamate + H(+). It functions in the pathway amino-acid biosynthesis; L-tryptophan biosynthesis; L-tryptophan from chorismate: step 1/5. In Halobacterium salinarum (strain ATCC 700922 / JCM 11081 / NRC-1) (Halobacterium halobium), this protein is Anthranilate synthase component 1 1 (trpE1).